The sequence spans 543 residues: Glutamyl-tRNA(Gln) amidotransferase subunit A, chloroplastic/mitochondrial (543 aa).

Catalysis depends on charge relay system residues lysine 123 and serine 198. Serine 222 (acyl-ester intermediate) is an active-site residue.

It belongs to the amidase family. GatA subfamily. Subunit of the heterotrimeric GatCAB amidotransferase (AdT) complex, composed of A, B and C subunits.

It is found in the mitochondrion. The protein resides in the plastid. The protein localises to the chloroplast stroma. It catalyses the reaction L-glutamyl-tRNA(Gln) + L-glutamine + ATP + H2O = L-glutaminyl-tRNA(Gln) + L-glutamate + ADP + phosphate + H(+). Functionally, allows the formation of correctly charged Gln-tRNA(Gln) through the transamidation of misacylated Glu-tRNA(Gln) in chloroplasts and mitochondria. The reaction takes place in the presence of glutamine and ATP through an activated gamma-phospho-Glu-tRNA(Gln). The polypeptide is Glutamyl-tRNA(Gln) amidotransferase subunit A, chloroplastic/mitochondrial (Oryza sativa subsp. japonica (Rice)).